The sequence spans 404 residues: Cysteine desulfurase IscS (404 aa).

Pyridoxal 5'-phosphate contacts are provided by residues 75–76 (AT), Asn-155, Gln-183, and 203–205 (SGH). Position 206 is an N6-(pyridoxal phosphate)lysine (Lys-206). Thr-243 is a binding site for pyridoxal 5'-phosphate. Cys-328 functions as the Cysteine persulfide intermediate in the catalytic mechanism. Cys-328 contributes to the [2Fe-2S] cluster binding site.

Belongs to the class-V pyridoxal-phosphate-dependent aminotransferase family. NifS/IscS subfamily. As to quaternary structure, homodimer. Forms a heterotetramer with IscU, interacts with other sulfur acceptors. Pyridoxal 5'-phosphate serves as cofactor.

It localises to the cytoplasm. The enzyme catalyses (sulfur carrier)-H + L-cysteine = (sulfur carrier)-SH + L-alanine. It functions in the pathway cofactor biosynthesis; iron-sulfur cluster biosynthesis. Master enzyme that delivers sulfur to a number of partners involved in Fe-S cluster assembly, tRNA modification or cofactor biosynthesis. Catalyzes the removal of elemental sulfur atoms from cysteine to produce alanine. Functions as a sulfur delivery protein for Fe-S cluster synthesis onto IscU, an Fe-S scaffold assembly protein, as well as other S acceptor proteins. In Actinobacillus succinogenes (strain ATCC 55618 / DSM 22257 / CCUG 43843 / 130Z), this protein is Cysteine desulfurase IscS.